Reading from the N-terminus, the 58-residue chain is ATP synthase F(0) complex subunit k, mitochondrial (58 aa).

Lysine 16 and lysine 17 each carry N6-acetyllysine. Residues 23–45 (TLTGRMNCVLATYGGIALLVLYF) traverse the membrane as a helical segment.

As to quaternary structure, component of the ATP synthase complex composed at least of ATP5F1A/subunit alpha, ATP5F1B/subunit beta, ATP5MC1/subunit c (homooctomer), MT-ATP6/subunit a, MT-ATP8/subunit 8, ATP5ME/subunit e, ATP5MF/subunit f, ATP5MG/subunit g, ATP5MK/subunit k, ATP5MJ/subunit j, ATP5F1C/subunit gamma, ATP5F1D/subunit delta, ATP5F1E/subunit epsilon, ATP5PF/subunit F6, ATP5PB/subunit b, ATP5PD/subunit d, ATP5PO/subunit OSCP. ATP synthase complex consists of a soluble F(1) head domain (subunits alpha(3) and beta(3)) - the catalytic core - and a membrane F(0) domain - the membrane proton channel (subunits c, a, 8, e, f, g, k and j). These two domains are linked by a central stalk (subunits gamma, delta, and epsilon) rotating inside the F1 region and a stationary peripheral stalk (subunits F6, b, d, and OSCP). The ATP synthase complex/complex V exists as a monomeric and a dimeric supercomplex that helps shape mitochondrial cristae to optimize proton flow. As to expression, ubiquitous. Highly expressed in skeletal and cardiac muscle. Moderately expressed in brain, thymus, stomach and testis. Lowest expression levels were detected in lung, liver, kidney, adrenal gland, spleen, small intestine and adipose tissue. In streptozotocin-induced diabetes, the insulin-sensitive tissues skeletal and cardiac muscle were down-regulated.

Its subcellular location is the mitochondrion membrane. Its function is as follows. Subunit k, of the mitochondrial membrane ATP synthase complex (F(1)F(0) ATP synthase or Complex V) that produces ATP from ADP in the presence of a proton gradient across the membrane which is generated by electron transport complexes of the respiratory chain. ATP synthase complex consist of a soluble F(1) head domain - the catalytic core - and a membrane F(1) domain - the membrane proton channel. These two domains are linked by a central stalk rotating inside the F(1) region and a stationary peripheral stalk. During catalysis, ATP synthesis in the catalytic domain of F(1) is coupled via a rotary mechanism of the central stalk subunits to proton translocation. In vivo, can only synthesize ATP although its ATP hydrolase activity can be activated artificially in vitro. Part of the complex F(0) domain. Required for dimerization of the ATP synthase complex and as such regulates ATP synthesis in the mitochondria. This chain is ATP synthase F(0) complex subunit k, mitochondrial (Atp5mk), found in Rattus norvegicus (Rat).